Consider the following 666-residue polypeptide: MRKINLLDLETTNKIAAGEVIERPFSVVKELVENSIDAGAKNITIEIEDGGQKLIKIIDDGEGIYPIDIKNAFLPHATSKINSIEDIYKISTMGFRGEALASISSVSKTKLKSRVDSYNFGKEIYIEGGKIEYLKDTGCNVGTTIEVSDLFYNVPARLKFLKSARSDSSSISDIVNRFILAHPDISFNLINKGKQSIKSYGTGNLKDSIRCVYNKTISENLINFESHKDIISVYGFIGKPEISRKSRTNQSIFVNKRYVKSKFITAAVENAFKSFLTVNSYPFFVIFIDIFPEYIDVNVHPTKSEVKFKDERAMFKTIFDAVHGAIKGELKESFTNFFNKEDINIYDSEKSITEPIKLEKEEVQIPIDLNSNNKIDIFGNNINKLSNNTELLKNIGIKEKNTLENNNDFYTSKQNEIYYANKNDECLNSCNKDNYSKIEKSLQKDNKNPDTLYLNEHNTNSSSINIKENKPNNFYVDMKIIGQFNNTYILIEKDKELYIIDQHAAHEKVLFEKFKSEIENRYVISQILLSPVVIELSEDEFNIYEENKDIFKNSGFSVETFGEYTINIKEVPLILGKPNVENLFMDILYNLKNMKSKETSTIKYNAIATLACKSAVKANDNLKEEEIKKLIEDMLILNNPYTCPHGRPTMIKFTLKDLEKKFKRIQ.

It belongs to the DNA mismatch repair MutL/HexB family.

In terms of biological role, this protein is involved in the repair of mismatches in DNA. It is required for dam-dependent methyl-directed DNA mismatch repair. May act as a 'molecular matchmaker', a protein that promotes the formation of a stable complex between two or more DNA-binding proteins in an ATP-dependent manner without itself being part of a final effector complex. This is DNA mismatch repair protein MutL from Clostridium botulinum (strain Langeland / NCTC 10281 / Type F).